A 237-amino-acid polypeptide reads, in one-letter code: UPF0053 inner membrane protein YgdQ (237 aa).

Residues 1–17 are Periplasmic-facing; it reads MLFAWITDPNAWLALGT. The chain crosses the membrane as a helical span at residues 18–38; the sequence is LTLLEIVLGIDNIIFLSLVVA. Over 39–50 the chain is Cytoplasmic; the sequence is KLPTAQRAHARR. The helical transmembrane segment at 51–71 threads the bilayer; the sequence is LGLAGAMVMRLALLASIAWVT. The Periplasmic segment spans residues 72 to 79; it reads RLTNPLFT. A helical membrane pass occupies residues 80-100; that stretch reads IFSQEISARDLILLLGGLFLI. Over 101–124 the chain is Cytoplasmic; sequence WKASKEIHESIEGEEEGLKTRVSS. A helical membrane pass occupies residues 125–145; it reads FLGAIVQIMLLDIIFSLDSVI. Topologically, residues 146 to 151 are periplasmic; it reads TAVGLS. Residues 152 to 172 traverse the membrane as a helical segment; it reads DHLFIMMAAVVIAVGVMMFAA. The Cytoplasmic portion of the chain corresponds to 173–186; it reads RSIGDFVERHPSVK. The chain crosses the membrane as a helical span at residues 187–207; it reads MLALSFLILVGFTLILESFDI. Residues 208–209 lie on the Periplasmic side of the membrane; sequence HV. Residues 210-230 traverse the membrane as a helical segment; it reads PKGYIYFAMFFSIAVESLNLI. Over 231–237 the chain is Cytoplasmic; that stretch reads RNKKNPL.

Belongs to the UPF0053 family.

It localises to the cell inner membrane. This Escherichia coli O157:H7 protein is UPF0053 inner membrane protein YgdQ (ygdQ).